Here is a 239-residue protein sequence, read N- to C-terminus: Phosphoribosylaminoimidazole-succinocarboxamide synthase (239 aa).

Belongs to the SAICAR synthetase family.

The enzyme catalyses 5-amino-1-(5-phospho-D-ribosyl)imidazole-4-carboxylate + L-aspartate + ATP = (2S)-2-[5-amino-1-(5-phospho-beta-D-ribosyl)imidazole-4-carboxamido]succinate + ADP + phosphate + 2 H(+). It participates in purine metabolism; IMP biosynthesis via de novo pathway; 5-amino-1-(5-phospho-D-ribosyl)imidazole-4-carboxamide from 5-amino-1-(5-phospho-D-ribosyl)imidazole-4-carboxylate: step 1/2. The polypeptide is Phosphoribosylaminoimidazole-succinocarboxamide synthase (Bacillus cereus (strain G9842)).